The sequence spans 417 residues: Gamma-glutamyl phosphate reductase (417 aa).

It belongs to the gamma-glutamyl phosphate reductase family.

It is found in the cytoplasm. It carries out the reaction L-glutamate 5-semialdehyde + phosphate + NADP(+) = L-glutamyl 5-phosphate + NADPH + H(+). It functions in the pathway amino-acid biosynthesis; L-proline biosynthesis; L-glutamate 5-semialdehyde from L-glutamate: step 2/2. Functionally, catalyzes the NADPH-dependent reduction of L-glutamate 5-phosphate into L-glutamate 5-semialdehyde and phosphate. The product spontaneously undergoes cyclization to form 1-pyrroline-5-carboxylate. This Legionella pneumophila subsp. pneumophila (strain Philadelphia 1 / ATCC 33152 / DSM 7513) protein is Gamma-glutamyl phosphate reductase.